A 157-amino-acid chain; its full sequence is Transcription elongation factor GreA (157 aa).

The protein belongs to the GreA/GreB family.

Its function is as follows. Necessary for efficient RNA polymerase transcription elongation past template-encoded arresting sites. The arresting sites in DNA have the property of trapping a certain fraction of elongating RNA polymerases that pass through, resulting in locked ternary complexes. Cleavage of the nascent transcript by cleavage factors such as GreA or GreB allows the resumption of elongation from the new 3'terminus. GreA releases sequences of 2 to 3 nucleotides. The chain is Transcription elongation factor GreA from Brucella abortus (strain S19).